Here is a 106-residue protein sequence, read N- to C-terminus: UPF0145 protein Fphi_1781 (106 aa).

It belongs to the UPF0145 family.

The sequence is that of UPF0145 protein Fphi_1781 from Francisella philomiragia subsp. philomiragia (strain ATCC 25017 / CCUG 19701 / FSC 153 / O#319-036).